We begin with the raw amino-acid sequence, 559 residues long: Tectonic-like complex member MKS1 (559 aa).

Residues 311 to 439 (LRLFVNGEVV…TVSTWRPVEL (129 aa)) form the C2 B9-type domain.

As to quaternary structure, part of the tectonic-like complex (also named B9 complex). Interacts with TMEM107. Interacts with TCTN3, AHI1, TCTN1, TCTN2, CC2D2A. Interacts with FLNA. Interacts with TMEM67. Interacts with B9D1 and B9D2.

It is found in the cytoplasm. It localises to the cytoskeleton. The protein resides in the cilium basal body. Its subcellular location is the microtubule organizing center. The protein localises to the centrosome. Component of the tectonic-like complex, a complex localized at the transition zone of primary cilia and acting as a barrier that prevents diffusion of transmembrane proteins between the cilia and plasma membranes. Involved in centrosome migration to the apical cell surface during early ciliogenesis. Required for ciliary structure and function, including a role in regulating length and appropriate number through modulating centrosome duplication. Required for cell branching morphology. The protein is Tectonic-like complex member MKS1 (MKS1) of Homo sapiens (Human).